The following is a 365-amino-acid chain: Eukaryotic translation initiation factor 3 subunit H (365 aa).

An MPN domain is found at 15–166 (ILLDSLVVMK…IRAWRLSTAA (152 aa)). Residues 276–295 (KRQQENESRLARGDPPLPMD) are disordered. Positions 277 to 287 (RQQENESRLAR) are enriched in basic and acidic residues.

It belongs to the eIF-3 subunit H family. Component of the eukaryotic translation initiation factor 3 (eIF-3) complex.

It is found in the cytoplasm. Its function is as follows. Component of the eukaryotic translation initiation factor 3 (eIF-3) complex, which is involved in protein synthesis of a specialized repertoire of mRNAs and, together with other initiation factors, stimulates binding of mRNA and methionyl-tRNAi to the 40S ribosome. The eIF-3 complex specifically targets and initiates translation of a subset of mRNAs involved in cell proliferation. This chain is Eukaryotic translation initiation factor 3 subunit H, found in Caenorhabditis briggsae.